A 1125-amino-acid chain; its full sequence is Transient receptor potential cation channel subfamily A member 1 (1125 aa).

Over 1–721 the chain is Cytoplasmic; sequence MKRSLRRVLR…KWCAYGFRAH (721 aa). ANK repeat units lie at residues 63–94, 98–127, 131–161, 165–194, 198–227, 239–268, 272–301, 309–338, and 342–371; these read ENLC…ALNV, YGNT…NPNL, NMMA…NINL, NGNT…KLCK, WGDY…KTGY, KKAS…HIDM, AKCM…GSSD, NQET…DINS, and EGRS…KVDI. 5 disulfide bridges follow: cysteine 193/cysteine 666, cysteine 463/cysteine 666, cysteine 609/cysteine 622, cysteine 622/cysteine 666, and cysteine 634/cysteine 859. Proline 395 carries the 4-hydroxyproline; transient modification. 5 ANK repeats span residues 413-442, 446-475, 482-511, 514-543, and 548-577; these read DGCT…SVHS, DKKS…DTRL, HGMT…LFLS, NGWT…KCTD, and EGNT…DILL. Residues cysteine 415 and cysteine 422 each coordinate (E)-cinnamaldehyde. Cysteine 622 contributes to the (E)-cinnamaldehyde binding site. Residue cysteine 634 is modified to Cysteine sulfenic acid (-SOH); transient; in hyperoxia. (E)-cinnamaldehyde is bound by residues cysteine 642, cysteine 666, and lysine 712. Residues 722 to 742 form a helical membrane-spanning segment; that stretch reads MMNLGSYCLGLIPMTLLVVKI. At 743-767 the chain is on the extracellular side; it reads QPGMAFNSTGIINETISTHEERINT. Asparagine 749 and asparagine 755 each carry an N-linked (GlcNAc...) asparagine glycan. The helical transmembrane segment at 768-788 threads the bilayer; that stretch reads LNSFPLKICMILVFLSSIFGY. Residues 789–806 are Cytoplasmic-facing; the sequence is CKEVVQIFQQKRNYFLDY. Residues glutamate 791, glutamine 794, asparagine 808, and glutamate 811 each contribute to the Ca(2+) site. Residues 807-827 traverse the membrane as a helical segment; sequence NNALEWVIYTTSMIFVLPLFL. Residues 828–832 are Extracellular-facing; sequence DIPAY. The helical transmembrane segment at 833 to 853 threads the bilayer; it reads MQWQCGAIAIFFYWMNFLLYL. Residues 854–876 lie on the Cytoplasmic side of the membrane; sequence QRFENCGIFIVMLEVIFKTLLRS. Cysteine sulfenic acid (-SOH); transient; in hyperoxia is present on cysteine 859. A helical membrane pass occupies residues 877–897; that stretch reads TGVFIFLLLAFGLSFYVLLNF. The Extracellular portion of the chain corresponds to 898-904; that stretch reads QDAFSTP. An intramembrane region (pore-forming) is located at residues 905-925; that stretch reads LLSLIQTFSMMLGDINYRDAF. The Extracellular segment spans residues 926-937; the sequence is LEPLFRNELAYP. Residues 938 to 959 traverse the membrane as a helical segment; it reads VLTFGQLIAFTMFVPIVLMNLL. Residues 960–1125 lie on the Cytoplasmic side of the membrane; that stretch reads IGLAVGDIAE…THCSISHPDI (166 aa). Residues 1044-1073 are a coiled coil; the sequence is MEILKQKYRLKDLTSLLEKQHELIKLIIQK. 1048-1054 serves as a coordination point for a 1,2-diacyl-sn-glycero-3-phospho-(1D-myo-inositol); that stretch reads KQKYRLK.

Belongs to the transient receptor (TC 1.A.4) family. Homotetramer. Interacts with TMEM100. Interacts with EGLN1. Interacts with the scorpion wasabi receptor toxin at the same site that electrophiles but in a non-covalent manner. TRPA1 activation by electrophiles occurs though covalent modification of specific cysteine residues in the N-terminal cytoplasmic domain. In terms of processing, hydroxylation is required for TRPA1 activity inhibition in normoxia. In hypoxia, the decrease in oxygen concentration diminishes the activity of the hydroxylase EGLN1, thus relieving TRPA1 from inhibition and ultimately leading to channel activation. Post-translationally, oxidation of Cys-634 and Cys-859 in hyperoxia may override the hydroxylase EGLN1-mediated inhibition, causing TRPA1 activation. As to expression, specifically expressed in a subset of nociceptive neurons. Expressed in dorsal root ganglia.

The protein resides in the cell membrane. The enzyme catalyses Ca(2+)(in) = Ca(2+)(out). It catalyses the reaction Mg(2+)(in) = Mg(2+)(out). The catalysed reaction is Na(+)(in) = Na(+)(out). It carries out the reaction K(+)(in) = K(+)(out). The enzyme catalyses Zn(2+)(in) = Zn(2+)(out). With respect to regulation, electrophilic ligands activate the channel by covalent modification of intracellular cysteines; Cys-622 plays a key role in covalent binding of electrophiles. Extracellular Ca(2+) both potentiates and inactivates TRPA1; a rapid potentiation follows by slow desensitization. Activated by increase in intracellular Ca(2+) concentration. Inhibited by ruthenium red, a potent blocker of TRPV channels and selectively by A-967079. Activated by benzyl isothiocyanate (BITC), iodoacetamide, sulfhydryl reactive agent MTSEA, N-methyl maleimide (NMM), N-ethylmaleimide (NEM), and 2-aminoethyldiphenylborinate (2-APB). Also activated by hyperoxia. Acivated by intracellular Zn(2+). TRPA1 activation may critically depend on the presence of small intracellular compounds such as polyphosphates. Its function is as follows. Ligand-activated Ca(2+)-permeable, nonselective cation channel. Involved in pain detection and possibly also in cold perception, oxygen concentration perception, cough, itch, and inner ear function. Has a relatively high Ca(2+) selectivity, with a preference for divalent over monovalent cations (Ca(2+) &gt; Ba(2+) &gt; Mg(2+) &gt; NH4(+) &gt; Li(+) &gt; K(+)), the influx of cation into the cytoplasm, leads to membrane depolarization. Has a central role in the pain response to endogenous inflammatory mediators, such as bradykinin and to a diverse array of irritants. Activated by a large variety of structurally unrelated electrophilic and non-electrophilic chemical compounds, such as allylthiocyanate (AITC) from mustard oil or wasabi, cinnamaldehyde, diallyl disulfide (DADS) from garlic, and acrolein, an environmental irritant. Electrophilic ligands activate TRPA1 by interacting with critical N-terminal Cys residues in a covalent manner. Non-electrophile agonists bind at distinct sites in the transmembrane domain to promote channel activation. Also acts as an ionotropic cannabinoid receptor by being activated by delta(9)-tetrahydrocannabinol (THC), the psychoactive component of marijuana. May be a component for the mechanosensitive transduction channel of hair cells in inner ear, thereby participating in the perception of sounds. This is Transient receptor potential cation channel subfamily A member 1 from Rattus norvegicus (Rat).